The chain runs to 197 residues: RNA-binding protein Rsf1 (197 aa).

Residues 7 to 80 (TRVYVGNLTD…SQLRVEISKG (74 aa)) form the RRM domain. Residues 74-197 (RVEISKGRPR…SRSPVGNHRF (124 aa)) are disordered. Residues 89 to 102 (GPMDRGGRRGDFGR) show a composition bias toward basic and acidic residues. Thr-106 is subject to Phosphothreonine. Composition is skewed to low complexity over residues 117-144 (QRGSSGSSSRHTERGYSSGRSGASSYNG) and 166-176 (RYSSGSSASYG). Phosphoserine occurs at positions 168, 171, 174, 188, and 190.

It belongs to the splicing factor SR family. Extensively phosphorylated on serine residues in the RS domain.

The protein localises to the nucleus. Functionally, may control important aspects of development. This chain is RNA-binding protein Rsf1 (Rsf1), found in Drosophila melanogaster (Fruit fly).